Here is a 164-residue protein sequence, read N- to C-terminus: Phosphopantetheine adenylyltransferase (164 aa).

Threonine 10 contributes to the substrate binding site. ATP is bound by residues threonine 10 to phenylalanine 11 and histidine 18. Positions 44, 76, and 90 each coordinate substrate. Residues glycine 91–arginine 93, glutamate 101, and tyrosine 126–serine 132 each bind ATP.

Belongs to the bacterial CoaD family. Homohexamer. Mg(2+) serves as cofactor.

It is found in the cytoplasm. The catalysed reaction is (R)-4'-phosphopantetheine + ATP + H(+) = 3'-dephospho-CoA + diphosphate. It functions in the pathway cofactor biosynthesis; coenzyme A biosynthesis; CoA from (R)-pantothenate: step 4/5. In terms of biological role, reversibly transfers an adenylyl group from ATP to 4'-phosphopantetheine, yielding dephospho-CoA (dPCoA) and pyrophosphate. The chain is Phosphopantetheine adenylyltransferase from Halorhodospira halophila (strain DSM 244 / SL1) (Ectothiorhodospira halophila (strain DSM 244 / SL1)).